The chain runs to 195 residues: Putative C-P lyase subunit protein HtxG (195 aa).

It belongs to the PhnH family.

Its function is as follows. Belongs to an operon involved in hypophosphite oxidation. Exact function not known. The sequence is that of Putative C-P lyase subunit protein HtxG (htxG) from Stutzerimonas stutzeri (Pseudomonas stutzeri).